A 523-amino-acid chain; its full sequence is Aldehyde oxidase GLOX (523 aa).

Residues 1-19 (MILDAAIVALADLPGTWEL) form the signal peptide.

It localises to the secreted. The protein localises to the cell wall. It carries out the reaction an aldehyde + O2 + H2O = a carboxylate + H2O2 + H(+). Functionally, catalyzes the oxidation of aldehydes to the corresponding carboxylate by coupling the reaction to the reduction of dioxygen to hydrogen peroxide. Substrates include glyoxal and other aldehydes. Involved in disease resistance against the grapevine powdery mildew E.necator. Is sufficient to confer disease resistance to E.necator. Can produce hydrogen peroxide in response to E.necator infection, and this may directly play a role in the defense mechanism during plant-pathogen interactions. The sequence is that of Aldehyde oxidase GLOX from Vitis pseudoreticulata (Chinese wild grapevine).